The sequence spans 432 residues: MHIAVVGLSHRTAPVEIRERLSIPEQSMEMSLKTLRGNDQVLEASILSTCNRLEIYTLVRHPELGVGAVNEFLSNHSGLQTGELSPHLFNFHHQDAVDHLLRVAAGLDSLVLGEGQILSQVKKMMRLGQEHKSLGPILNRLLTQAVTTGKKVRSETNLGTGAVSISSAAVELAQLKLGQSRGVDDLVSLESEQIAVVGAGRMSRLLLQHLQAKGASGVVLVNRTVETAERLANDFPDLSVECRPLTDLNTFLSTSSLVFTSTAAEDPIIDASRLKPLNRRSQLRLIDIGVPRNVAADAATVDGVESHDVDDLEEVVARNQEARQAIAREAEHLLQDEAQQFLDWWDSLEAVPTINQLRSSMETIRTEELQKALSRMGPDFSARERKVVEALSKGIINKILHTPVTKLRASQARSERQQALRAVERLFDLDPS.

Residues 49 to 52 (TCNR), Ser109, 114 to 116 (EGQ), and Gln120 contribute to the substrate site. Cys50 acts as the Nucleophile in catalysis. 198–203 (GAGRMS) is a binding site for NADP(+).

The protein belongs to the glutamyl-tRNA reductase family. Homodimer.

It carries out the reaction (S)-4-amino-5-oxopentanoate + tRNA(Glu) + NADP(+) = L-glutamyl-tRNA(Glu) + NADPH + H(+). The protein operates within porphyrin-containing compound metabolism; protoporphyrin-IX biosynthesis; 5-aminolevulinate from L-glutamyl-tRNA(Glu): step 1/2. It participates in porphyrin-containing compound metabolism; chlorophyll biosynthesis. Catalyzes the NADPH-dependent reduction of glutamyl-tRNA(Glu) to glutamate 1-semialdehyde (GSA). This chain is Glutamyl-tRNA reductase, found in Synechococcus sp. (strain CC9902).